The primary structure comprises 367 residues: 5-amino-6-(D-ribitylamino)uracil--L-tyrosine 4-hydroxyphenyl transferase (367 aa).

The region spanning Val56 to Asp290 is the Radical SAM core domain. [4Fe-4S] cluster contacts are provided by Cys70, Cys74, and Cys77.

This sequence belongs to the radical SAM superfamily. CofH family. In terms of assembly, consists of two subunits, CofG and CofH. [4Fe-4S] cluster is required as a cofactor.

The catalysed reaction is 5-amino-6-(D-ribitylamino)uracil + L-tyrosine + S-adenosyl-L-methionine = 5-amino-5-(4-hydroxybenzyl)-6-(D-ribitylimino)-5,6-dihydrouracil + 2-iminoacetate + 5'-deoxyadenosine + L-methionine + H(+). The protein operates within cofactor biosynthesis; coenzyme F0 biosynthesis. In terms of biological role, catalyzes the radical-mediated synthesis of 5-amino-5-(4-hydroxybenzyl)-6-(D-ribitylimino)-5,6-dihydrouracil from 5-amino-6-(D-ribitylamino)uracil and L-tyrosine. In Methanoculleus marisnigri (strain ATCC 35101 / DSM 1498 / JR1), this protein is 5-amino-6-(D-ribitylamino)uracil--L-tyrosine 4-hydroxyphenyl transferase.